The sequence spans 634 residues: MNALKNFFIWAIIIGAAIVAFNLFEGKREFTTKVSLNEVVKLVEEGKVSYAEVRGNTAIIQTKDGQKLEVTLPPNTNLVDKMVEKGVRVEVANPEPPGGWLVNVFLSWLPILFFIGIWIFLLRQMSGGGNVNRAFNFGKSRAKVYIEEKPKVTFKDVAGIEEVKEEVKEIIEYLKDPVKFQKLGGRPPKGVLLYGEPGVGKTLLAKAIAGEAHVPFISVSGSDFVEMFVGVGAARVRDLFETAKKHAPCIIFIDEIDAVGRARGAIPVGGGHDEREQTLNQLLVEMDGFDTSDGIIVIAATNRPDILDPALLRPGRFDRQIFIPKPDVRGRYEILKVHARNKKLAKDVDLEFVARATPGFTGADLENLLNEAALLAARKGKEEITMEEIEEALDRITMGLERKGMTISPKEKEKIAIHEAGHALMGLVSDDDDKVHKISIIPRGMALGVTQQLPIEDKHIYDKKDLYNKILVLLGGRAAEEVFFGKDGITTGAENDLQRATDLAYRMVSMWGMSDKVGPIAIRRVANPFLGGMTTAVDTSPDLLREIDEEVKRIITEQYEKAKAIVEEYKEPLKAVVKKLLEKETITCEEFVEVFKLYGIELKDKCKKEELFDKDRKSEENKELKSEEVKEEVV.

Topologically, residues 1–5 (MNALK) are cytoplasmic. The chain crosses the membrane as a helical span at residues 6–26 (NFFIWAIIIGAAIVAFNLFEG). Over 27-100 (KREFTTKVSL…VANPEPPGGW (74 aa)) the chain is Periplasmic. Residues 101–121 (LVNVFLSWLPILFFIGIWIFL) form a helical membrane-spanning segment. Topologically, residues 122–634 (LRQMSGGGNV…KSEEVKEEVV (513 aa)) are cytoplasmic. 195–202 (GEPGVGKT) serves as a coordination point for ATP. His418 contacts Zn(2+). The active site involves Glu419. Positions 422 and 496 each coordinate Zn(2+). The disordered stretch occupies residues 615–634 (DRKSEENKELKSEEVKEEVV).

In the central section; belongs to the AAA ATPase family. It in the C-terminal section; belongs to the peptidase M41 family. As to quaternary structure, the isolated protease domain (residues 405-634) forms a stable hexamer. The cofactor is Zn(2+).

The protein localises to the cell inner membrane. Functionally, acts as a processive, ATP-dependent zinc metallopeptidase for both cytoplasmic and membrane proteins. Plays a role in the quality control of integral membrane proteins. This Aquifex aeolicus (strain VF5) protein is ATP-dependent zinc metalloprotease FtsH.